The chain runs to 153 residues: Putative ubiquitin-conjugating enzyme E2 N-like (153 aa).

The UBC core domain maps to 3–150; sequence ELPHRIIKET…ARAWTRLYAM (148 aa). The residue at position 83 (lysine 83) is an N6-acetyllysine.

It belongs to the ubiquitin-conjugating enzyme family. As to expression, expressed in epididymis (at protein level).

The chain is Putative ubiquitin-conjugating enzyme E2 N-like (UBE2NL) from Homo sapiens (Human).